The following is a 291-amino-acid chain: Bifunctional protein FolD (291 aa).

Residues 166–168 (GAS) and isoleucine 232 each bind NADP(+).

Belongs to the tetrahydrofolate dehydrogenase/cyclohydrolase family. Homodimer.

The enzyme catalyses (6R)-5,10-methylene-5,6,7,8-tetrahydrofolate + NADP(+) = (6R)-5,10-methenyltetrahydrofolate + NADPH. The catalysed reaction is (6R)-5,10-methenyltetrahydrofolate + H2O = (6R)-10-formyltetrahydrofolate + H(+). It functions in the pathway one-carbon metabolism; tetrahydrofolate interconversion. In terms of biological role, catalyzes the oxidation of 5,10-methylenetetrahydrofolate to 5,10-methenyltetrahydrofolate and then the hydrolysis of 5,10-methenyltetrahydrofolate to 10-formyltetrahydrofolate. This Photorhabdus laumondii subsp. laumondii (strain DSM 15139 / CIP 105565 / TT01) (Photorhabdus luminescens subsp. laumondii) protein is Bifunctional protein FolD.